A 233-amino-acid polypeptide reads, in one-letter code: Sugar fermentation stimulation protein homolog (233 aa).

It belongs to the SfsA family.

This chain is Sugar fermentation stimulation protein homolog, found in Teredinibacter turnerae (strain ATCC 39867 / T7901).